We begin with the raw amino-acid sequence, 181 residues long: ADP-ribosylation factor 1-like 2 (181 aa).

Residue Gly2 is the site of N-myristoyl glycine attachment. An important for the stable binding to the membranes region spans residues 3–16 (NVFGSLFKGLFGKR). GTP contacts are provided by residues 24 to 32 (GLDAAGKTT), 126 to 129 (NKQD), and Ala160.

This sequence belongs to the small GTPase superfamily. Arf family. In terms of tissue distribution, expressed in hypodermis, intestine, spermatheca, uterus, gonadal sheath, vulva cells, pharynx muscle, body wall muscle, head neurons, ventral nerve cord.

It is found in the golgi apparatus membrane. The enzyme catalyses GTP + H2O = GDP + phosphate + H(+). With respect to regulation, alternates between an inactive GDP-bound form and an active GTP-bound form. Activated by a guanine nucleotide-exchange factor (GEF) and inactivated by GTPase-activating protein (GAP). Functionally, small GTPase involved in protein trafficking between different compartments. Modulates vesicle budding and uncoating within the Golgi complex. In its GTP-bound form, triggers the recruitment of coatomer proteins to the Golgi membrane. The hydrolysis of ARF1-bound GTP, which is mediated by ARFGAPs proteins, is required for dissociation of coat proteins from Golgi membranes and vesicles. Involved in endoplasmic reticulum dynamics during embryogenesis. Also required for adult germline function. Plays a role in cell shedding during embryogenesis probably by promoting the endocytosis of cell adhesion molecules. During neurogenesis, involved in cell autonomous Q.p neuroblast asymmetric divisions that generate one precursor cell and one apoptotic cell, probably by controlling endocytosis. Plays a role in maintaining mitochondrial morphology. In Caenorhabditis elegans, this protein is ADP-ribosylation factor 1-like 2.